A 313-amino-acid chain; its full sequence is Porphobilinogen deaminase (313 aa).

Cysteine 242 carries the post-translational modification S-(dipyrrolylmethanemethyl)cysteine.

The protein belongs to the HMBS family. In terms of assembly, monomer. It depends on dipyrromethane as a cofactor.

The catalysed reaction is 4 porphobilinogen + H2O = hydroxymethylbilane + 4 NH4(+). It participates in porphyrin-containing compound metabolism; protoporphyrin-IX biosynthesis; coproporphyrinogen-III from 5-aminolevulinate: step 2/4. Its function is as follows. Tetrapolymerization of the monopyrrole PBG into the hydroxymethylbilane pre-uroporphyrinogen in several discrete steps. This is Porphobilinogen deaminase from Pseudomonas syringae pv. syringae (strain B728a).